Consider the following 581-residue polypeptide: Proline--tRNA ligase (581 aa).

This sequence belongs to the class-II aminoacyl-tRNA synthetase family. ProS type 1 subfamily. In terms of assembly, homodimer.

The protein resides in the cytoplasm. The catalysed reaction is tRNA(Pro) + L-proline + ATP = L-prolyl-tRNA(Pro) + AMP + diphosphate. Functionally, catalyzes the attachment of proline to tRNA(Pro) in a two-step reaction: proline is first activated by ATP to form Pro-AMP and then transferred to the acceptor end of tRNA(Pro). As ProRS can inadvertently accommodate and process non-cognate amino acids such as alanine and cysteine, to avoid such errors it has two additional distinct editing activities against alanine. One activity is designated as 'pretransfer' editing and involves the tRNA(Pro)-independent hydrolysis of activated Ala-AMP. The other activity is designated 'posttransfer' editing and involves deacylation of mischarged Ala-tRNA(Pro). The misacylated Cys-tRNA(Pro) is not edited by ProRS. The sequence is that of Proline--tRNA ligase from Delftia acidovorans (strain DSM 14801 / SPH-1).